Here is a 132-residue protein sequence, read N- to C-terminus: ATP synthase epsilon chain (132 aa).

It belongs to the ATPase epsilon chain family. In terms of assembly, F-type ATPases have 2 components, CF(1) - the catalytic core - and CF(0) - the membrane proton channel. CF(1) has five subunits: alpha(3), beta(3), gamma(1), delta(1), epsilon(1). CF(0) has three main subunits: a, b and c.

The protein localises to the cell membrane. In terms of biological role, produces ATP from ADP in the presence of a proton gradient across the membrane. This chain is ATP synthase epsilon chain, found in Brevibacillus brevis (strain 47 / JCM 6285 / NBRC 100599).